We begin with the raw amino-acid sequence, 280 residues long: MSKEVSEEGKTHHGKDYVDPPPAPLLDMGELKSWSFYRALIAEFIATLLFLYVTVATVIGHKKQTGPCDGVGLLGIAWAFGGMIFVLVYCTAGISGGHINPAVTFGLFLARKVSLVRALGYMIAQCLGAICGVGFVKAFMKTPYNTLGGGANTVADGYSKGTALGAEIIGTFVLVYTVFSATDPKRSARDSHIPVLAPLPIGFAVFMVHLATIPITGTGINPARSFGAAVIYNNEKAWDDQWIFWVGPFLGALAAAAYHQYILRASAIKALGSFRSNATN.

N-acetylmethionine is present on methionine 1. At 1–38 (MSKEVSEEGKTHHGKDYVDPPPAPLLDMGELKSWSFYR) the chain is on the cytoplasmic side. Residue lysine 3 is modified to N6,N6-dimethyllysine. The chain crosses the membrane as a helical span at residues 39–59 (ALIAEFIATLLFLYVTVATVI). Residues 60 to 69 (GHKKQTGPCD) are Extracellular-facing. A helical membrane pass occupies residues 70 to 90 (GVGLLGIAWAFGGMIFVLVYC). The Cytoplasmic portion of the chain corresponds to 91–118 (TAGISGGHINPAVTFGLFLARKVSLVRA). An NPA 1 motif is present at residues 100 to 102 (NPA). A helical transmembrane segment spans residues 119 to 139 (LGYMIAQCLGAICGVGFVKAF). Residues 140–160 (MKTPYNTLGGGANTVADGYSK) lie on the Extracellular side of the membrane. The chain crosses the membrane as a helical span at residues 161 to 181 (GTALGAEIIGTFVLVYTVFSA). The Cytoplasmic segment spans residues 182–192 (TDPKRSARDSH). A helical membrane pass occupies residues 193–213 (IPVLAPLPIGFAVFMVHLATI). The Extracellular portion of the chain corresponds to 214–242 (PITGTGINPARSFGAAVIYNNEKAWDDQW). An NPA 2 motif is present at residues 221 to 223 (NPA). A helical membrane pass occupies residues 243 to 263 (IFWVGPFLGALAAAAYHQYIL). Residues 264–280 (RASAIKALGSFRSNATN) lie on the Cytoplasmic side of the membrane. A phosphoserine mark is found at serine 273 and serine 276. A Phosphothreonine modification is found at threonine 279.

The protein belongs to the MIP/aquaporin (TC 1.A.8) family. PIP (TC 1.A.8.11) subfamily. Interacts with SYP61 and SYP121 in trafficking vesicles and at the plasma membrane. In terms of tissue distribution, highly expressed in flowers, expressed at low levels in siliques, and at low level in leaves and roots. Highly levels in elongating cells in both roots and shoots.

The protein resides in the cell membrane. Water channel required to facilitate the transport of water across cell membrane. May be involved in the osmoregulation in plants under high osmotic stress such as under a high salt condition. This is Aquaporin PIP2-7 from Arabidopsis thaliana (Mouse-ear cress).